Consider the following 150-residue polypeptide: Allograft inflammatory factor 1-like (150 aa).

At Ser-2 the chain carries N-acetylserine. Residue Ser-2 is modified to Phosphoserine. The 36-residue stretch at 47–82 folds into the EF-hand 1 domain; the sequence is EKLAAFKEKYMEFDLNNEGEIDLMSLKRMMEKLGVP. The Ca(2+) site is built by Asp-60, Asn-62, Glu-64, and Glu-66. Positions 83–117 constitute an EF-hand 2; degenerate domain; the sequence is KTHLEMKKMISEVTGGVSDTISYRDFVNMMLGKRS. The disordered stretch occupies residues 129–150; sequence KANESSPKPAGPPPERDIASLP. Ser-134 bears the Phosphoserine mark.

Homodimer (Potential). Monomer.

It is found in the cytoplasm. The protein localises to the cytoskeleton. It localises to the cell projection. The protein resides in the ruffle membrane. In terms of biological role, actin-binding protein that promotes actin bundling. May neither bind calcium nor depend on calcium for function. This chain is Allograft inflammatory factor 1-like (Aif1l), found in Mus musculus (Mouse).